A 480-amino-acid chain; its full sequence is Aromatic-L-amino-acid decarboxylase (480 aa).

Position 1 is an N-acetylmethionine (M1). 2 consecutive repeat copies span residues 58–115 (RDIE…TELE) and 118–178 (MMDW…TQAA). The tract at residues 58 to 178 (RDIEKIIMPG…AASPELTQAA (121 aa)) is 2 X approximate tandem repeats. Substrate is bound at residue T82. Pyridoxal 5'-phosphate-binding residues include A148 and S149. Substrate is bound at residue H192. The pyridoxal 5'-phosphate site is built by T246 and N300. Position 303 is an N6-(pyridoxal phosphate)lysine (K303).

The protein belongs to the group II decarboxylase family. As to quaternary structure, homodimer. The cofactor is pyridoxal 5'-phosphate.

It catalyses the reaction L-dopa + H(+) = dopamine + CO2. The enzyme catalyses 5-hydroxy-L-tryptophan + H(+) = serotonin + CO2. Its pathway is catecholamine biosynthesis; dopamine biosynthesis; dopamine from L-tyrosine: step 2/2. In terms of biological role, catalyzes the decarboxylation of L-3,4-dihydroxyphenylalanine (DOPA) to dopamine and L-5-hydroxytryptophan to serotonin. This chain is Aromatic-L-amino-acid decarboxylase, found in Rattus norvegicus (Rat).